The following is a 74-amino-acid chain: Translational regulator CsrA (74 aa).

It belongs to the CsrA/RsmA family. As to quaternary structure, homodimer; the beta-strands of each monomer intercalate to form a hydrophobic core, while the alpha-helices form wings that extend away from the core.

Its subcellular location is the cytoplasm. A translational regulator that binds mRNA to regulate translation initiation and/or mRNA stability. Usually binds in the 5'-UTR at or near the Shine-Dalgarno sequence preventing ribosome-binding, thus repressing translation. Its main target seems to be the major flagellin gene, while its function is anatagonized by FliW. In Alkaliphilus oremlandii (strain OhILAs) (Clostridium oremlandii (strain OhILAs)), this protein is Translational regulator CsrA.